The following is a 281-amino-acid chain: Shikimate dehydrogenase (NADP(+)) (281 aa).

Shikimate contacts are provided by residues Ser14–Ser16 and Thr61. Lys65 acts as the Proton acceptor in catalysis. Asn86 and Asp105 together coordinate shikimate. Residues Gly130–Ala134, Asn154–Lys159, and Met221 contribute to the NADP(+) site. Tyr223 provides a ligand contact to shikimate. Residue Gly245 participates in NADP(+) binding.

Belongs to the shikimate dehydrogenase family. In terms of assembly, homodimer.

It catalyses the reaction shikimate + NADP(+) = 3-dehydroshikimate + NADPH + H(+). The protein operates within metabolic intermediate biosynthesis; chorismate biosynthesis; chorismate from D-erythrose 4-phosphate and phosphoenolpyruvate: step 4/7. Involved in the biosynthesis of the chorismate, which leads to the biosynthesis of aromatic amino acids. Catalyzes the reversible NADPH linked reduction of 3-dehydroshikimate (DHSA) to yield shikimate (SA). In Azoarcus sp. (strain BH72), this protein is Shikimate dehydrogenase (NADP(+)).